The primary structure comprises 62 residues: Sperm protamine P1 (62 aa).

The interval 1 to 62 (MARYRRHSRS…RYSRRGRRRY (62 aa)) is disordered.

The protein belongs to the protamine P1 family. As to expression, testis.

The protein resides in the nucleus. Its subcellular location is the chromosome. In terms of biological role, protamines substitute for histones in the chromatin of sperm during the haploid phase of spermatogenesis. They compact sperm DNA into a highly condensed, stable and inactive complex. The sequence is that of Sperm protamine P1 (PRM1) from Antechinomys laniger (Eastern jerboa marsupial).